A 372-amino-acid polypeptide reads, in one-letter code: Queuine tRNA-ribosyltransferase (372 aa).

The Proton acceptor role is filled by Asp-89. Residues 89 to 93 (DSGGF), Asp-143, Gln-185, and Gly-212 each bind substrate. Positions 243 to 249 (GVGKPED) are RNA binding. The active-site Nucleophile is Asp-262. The segment at 267–271 (TRNAR) is RNA binding; important for wobble base 34 recognition. Residues Cys-300, Cys-302, Cys-305, and His-331 each coordinate Zn(2+).

The protein belongs to the queuine tRNA-ribosyltransferase family. As to quaternary structure, homodimer. Within each dimer, one monomer is responsible for RNA recognition and catalysis, while the other monomer binds to the replacement base PreQ1. The cofactor is Zn(2+).

The enzyme catalyses 7-aminomethyl-7-carbaguanine + guanosine(34) in tRNA = 7-aminomethyl-7-carbaguanosine(34) in tRNA + guanine. It participates in tRNA modification; tRNA-queuosine biosynthesis. In terms of biological role, catalyzes the base-exchange of a guanine (G) residue with the queuine precursor 7-aminomethyl-7-deazaguanine (PreQ1) at position 34 (anticodon wobble position) in tRNAs with GU(N) anticodons (tRNA-Asp, -Asn, -His and -Tyr). Catalysis occurs through a double-displacement mechanism. The nucleophile active site attacks the C1' of nucleotide 34 to detach the guanine base from the RNA, forming a covalent enzyme-RNA intermediate. The proton acceptor active site deprotonates the incoming PreQ1, allowing a nucleophilic attack on the C1' of the ribose to form the product. After dissociation, two additional enzymatic reactions on the tRNA convert PreQ1 to queuine (Q), resulting in the hypermodified nucleoside queuosine (7-(((4,5-cis-dihydroxy-2-cyclopenten-1-yl)amino)methyl)-7-deazaguanosine). The chain is Queuine tRNA-ribosyltransferase from Chromohalobacter salexigens (strain ATCC BAA-138 / DSM 3043 / CIP 106854 / NCIMB 13768 / 1H11).